Reading from the N-terminus, the 423-residue chain is Putative competence-damage inducible protein (423 aa).

This sequence belongs to the CinA family.

In Streptococcus pyogenes serotype M12 (strain MGAS2096), this protein is Putative competence-damage inducible protein.